The sequence spans 207 residues: Probable HTH-type transcriptional regulator YttP (207 aa).

Residues 3-63 (VSTKDKIIES…HLVSEFYEGY (61 aa)) enclose the HTH tetR-type domain. Positions 26–45 (SVREIAKSADVNVAHISYYF) form a DNA-binding region, H-T-H motif.

In Bacillus subtilis (strain 168), this protein is Probable HTH-type transcriptional regulator YttP (yttP).